The following is a 215-amino-acid chain: MQSVNQLKIDRLACQRGDKILFTDLSFNLQSGDFVQIEGHNGIGKTSLLRILAGLAQPLSGKVRWNSEEISKCREEYYYDLLYLGHHAGIKPELTAWENLKFYQQAGHCRQGDEILWNVLEKVGLLGREDIVASQLSAGQQKRIALARLWISQAPLWILDEPFNAIDKNGVKVLTGLFEQQAEKGGIVILTSHQEVPSSALTVLNLAQYKFTDNE.

The region spanning 7 to 209 (LKIDRLACQR…ALTVLNLAQY (203 aa)) is the ABC transporter domain. 39-46 (GHNGIGKT) lines the ATP pocket.

It belongs to the ABC transporter superfamily. CcmA exporter (TC 3.A.1.107) family. The complex is composed of two ATP-binding proteins (CcmA) and two transmembrane proteins (CcmB).

The protein resides in the cell inner membrane. It catalyses the reaction heme b(in) + ATP + H2O = heme b(out) + ADP + phosphate + H(+). Part of the ABC transporter complex CcmAB involved in the biogenesis of c-type cytochromes; once thought to export heme, this seems not to be the case, but its exact role is uncertain. Responsible for energy coupling to the transport system. The polypeptide is Cytochrome c biogenesis ATP-binding export protein CcmA (Mannheimia succiniciproducens (strain KCTC 0769BP / MBEL55E)).